A 243-amino-acid polypeptide reads, in one-letter code: Proteasome subunit beta 1 (243 aa).

The segment covering 1–14 has biased composition (polar residues); sequence MRAPQHNSDFSRTV. The tract at residues 1-34 is disordered; the sequence is MRAPQHNSDFSRTVDQLADDPNPYEPEIGSMPQN. Positions 1 to 48 are cleaved as a propeptide — removed in mature form; by autocatalysis; the sequence is MRAPQHNSDFSRTVDQLADDPNPYEPEIGSMPQNDLTRADLDNVNKTG. Thr-49 serves as the catalytic Nucleophile.

Belongs to the peptidase T1B family. The 20S proteasome core is composed of 14 alpha and 14 beta subunits that assemble into four stacked heptameric rings, resulting in a barrel-shaped structure. The two inner rings, each composed of seven catalytic beta subunits, are sandwiched by two outer rings, each composed of seven alpha subunits. The catalytic chamber with the active sites is on the inside of the barrel. Has a gated structure, the ends of the cylinder being occluded by the N-termini of the alpha-subunits. Is capped at one or both ends by the proteasome regulatory ATPase, PAN.

It localises to the cytoplasm. It catalyses the reaction Cleavage of peptide bonds with very broad specificity.. The formation of the proteasomal ATPase PAN-20S proteasome complex, via the docking of the C-termini of PAN into the intersubunit pockets in the alpha-rings, triggers opening of the gate for substrate entry. Interconversion between the open-gate and close-gate conformations leads to a dynamic regulation of the 20S proteasome proteolysis activity. Its function is as follows. Component of the proteasome core, a large protease complex with broad specificity involved in protein degradation. This chain is Proteasome subunit beta 1, found in Haloterrigena turkmenica (strain ATCC 51198 / DSM 5511 / JCM 9101 / NCIMB 13204 / VKM B-1734 / 4k) (Halococcus turkmenicus).